Reading from the N-terminus, the 152-residue chain is MNEKYVVTWDMLQIHARKLAQRLLPAEQWKGIIAVSRGGLVPAGILARELGIRYVDTVCISSYDHDNQRDLKVLKRAEGDGEGFIVIDDLVDTGGTATAIREMYPKAHFVTIFAKPAGRPLVDDYVVDIPQNTWIEQPWDMAVTFVAPLSGK.

Residues 37–38 (RG), arginine 69, and 88–96 (DDLVDTGGT) each bind 5-phospho-alpha-D-ribose 1-diphosphate. Arginine 69 lines the GMP pocket. Aspartate 89 lines the Mg(2+) pocket. Positions 92 and 135 each coordinate guanine. Residues aspartate 92 and isoleucine 135 each coordinate xanthine. GMP is bound by residues 92–96 (DTGGT) and 134–135 (WI).

Belongs to the purine/pyrimidine phosphoribosyltransferase family. XGPT subfamily. In terms of assembly, homotetramer. Mg(2+) serves as cofactor.

Its subcellular location is the cell inner membrane. The enzyme catalyses GMP + diphosphate = guanine + 5-phospho-alpha-D-ribose 1-diphosphate. It catalyses the reaction XMP + diphosphate = xanthine + 5-phospho-alpha-D-ribose 1-diphosphate. The catalysed reaction is IMP + diphosphate = hypoxanthine + 5-phospho-alpha-D-ribose 1-diphosphate. Its pathway is purine metabolism; GMP biosynthesis via salvage pathway; GMP from guanine: step 1/1. It functions in the pathway purine metabolism; XMP biosynthesis via salvage pathway; XMP from xanthine: step 1/1. In terms of biological role, purine salvage pathway enzyme that catalyzes the transfer of the ribosyl-5-phosphate group from 5-phospho-alpha-D-ribose 1-diphosphate (PRPP) to the N9 position of the 6-oxopurines guanine and xanthine to form the corresponding ribonucleotides GMP (guanosine 5'-monophosphate) and XMP (xanthosine 5'-monophosphate), with the release of PPi. To a lesser extent, also acts on hypoxanthine. The chain is Xanthine-guanine phosphoribosyltransferase from Yersinia pseudotuberculosis serotype O:1b (strain IP 31758).